The following is a 650-amino-acid chain: Chaperone protein HtpG (650 aa).

The tract at residues 1–344 (MSKHTHSFQA…SADLPLNVSR (344 aa)) is a; substrate-binding. Residues 345-582 (ELLQESRDVR…DGGMSTQLAR (238 aa)) are b. Residues 583–650 (LLKQAGQSAP…YVKRVNALLA (68 aa)) are c.

The protein belongs to the heat shock protein 90 family. Homodimer.

The protein localises to the cytoplasm. Molecular chaperone. Has ATPase activity. The chain is Chaperone protein HtpG from Acidovorax sp. (strain JS42).